We begin with the raw amino-acid sequence, 80 residues long: Peptide LaIT2 (80 aa).

Residues 1-21 form the signal peptide; the sequence is MAKHLIVMFLVIMVISSLVDC. The 32-residue stretch at 49–80 folds into the BetaSPN-type CS-alpha/beta domain; it reads QYGCPIISNMCEDHCRRKKMEGQCDLLDCVCS. 3 cysteine pairs are disulfide-bonded: Cys-52–Cys-72, Cys-59–Cys-77, and Cys-63–Cys-79.

This sequence belongs to the long chain scorpion toxin family. Class 2 subfamily. In terms of tissue distribution, expressed by the venom gland.

The protein resides in the secreted. Its function is as follows. Dual-function toxin that acts both as an insecticidal and an antimicrobial peptide. May inhibit voltage-gated potassium channels (Kv). This amphipathic peptide causes significant antimicrobial activity against E.coli (MIC=7 uM) but does not show any activity against S.aureus even at high concentration. In vivo, causes paralysis or death to crickets. The protein is Peptide LaIT2 of Liocheles australasiae (Dwarf wood scorpion).